Consider the following 1309-residue polypeptide: Putative receptor-type tyrosine-protein phosphatase mosPTP-1 (1309 aa).

A signal peptide spans 1-36; the sequence is MNSAPRNAGAARSVDRRGFIAACGLLVLLVVRMLGA. At 37–572 the chain is on the extracellular side; sequence ADATRIFDIE…RQVYDDYNLA (536 aa). N-linked (GlcNAc...) asparagine glycosylation is found at N60, N107, N162, N257, N353, N389, N455, N501, and N513. Fibronectin type-III domains lie at 147–244, 249–347, 350–449, and 450–553; these read PPGR…TLRE, KPVT…DEGV, KPLN…SGPS, and APKV…LQLH. The chain crosses the membrane as a helical span at residues 573–593; the sequence is VLGGIVFSCFGLLLIVLSFLL. Topologically, residues 594–1309 are cytoplasmic; it reads WKKCFHAAYY…NHLNLDHNQS (716 aa). Tyrosine-protein phosphatase domains lie at 656-921 and 944-1196; these read FSKE…LVEA and IDNQ…LSYM. C862 acts as the Phosphocysteine intermediate in catalysis. A disordered region spans residues 1239-1269; it reads NSGDGGGNGNDGVPTGNGTNGGLPMSGGGTT. The span at 1256-1268 shows a compositional bias: gly residues; the sequence is GTNGGLPMSGGGT.

The protein belongs to the protein-tyrosine phosphatase family. Receptor class subfamily. In terms of assembly, interacts with C-type lectin mosGCTL-1; the interaction probably mediates the recruitment of West Nile virus particles in complex with C-type lectin mosGCTL-1 to the cell surface. Interacts with C-type lectin mosGCTL-7; the interaction probably mediates the recruitment of Japanese encephalitis virus particles in complex with C-type lectin mosGCTL-7 to the cell surface. As to expression, salivary gland (at protein level). Hemolymph. Low-level expression in midgut.

The protein localises to the cell membrane. It catalyses the reaction O-phospho-L-tyrosyl-[protein] + H2O = L-tyrosyl-[protein] + phosphate. Its function is as follows. Putative protein tyrosine-protein phosphatase. Functionally, (Microbial infection) Facilitates West Nile virus infection in mosquitoes probably via recruiting West Nile virus particles in complex with C-type lectin mosGCTL-1 to the cell surface. (Microbial infection) Facilitates Japanese encephalitis virus infection in mosquitoes probably via recruiting Japanese encephalitis virus particles in complex with C-type lectin mosGCTL-7 to the cell surface. The polypeptide is Putative receptor-type tyrosine-protein phosphatase mosPTP-1 (Aedes aegypti (Yellowfever mosquito)).